We begin with the raw amino-acid sequence, 274 residues long: Putative HTH-type transcriptional regulator RmpR (274 aa).

Residues 18–88 (IERADAIVER…RSGGTFVVNQ (71 aa)) enclose the HTH gntR-type domain. Residues 46-65 (EAALSEMFGVGGATLREALS) constitute a DNA-binding region (H-T-H motif). Residues 250–265 (SRPSSPATAPDGSSSA) are compositionally biased toward polar residues. The disordered stretch occupies residues 250–274 (SRPSSPATAPDGSSSAEAAMIQEGQ).

Functionally, may regulate the transcription of the rmpAB operon. In Mycobacterium gastri, this protein is Putative HTH-type transcriptional regulator RmpR (rmpR).